Consider the following 181-residue polypeptide: ATP synthase subunit delta (181 aa).

This sequence belongs to the ATPase delta chain family. In terms of assembly, F-type ATPases have 2 components, F(1) - the catalytic core - and F(0) - the membrane proton channel. F(1) has five subunits: alpha(3), beta(3), gamma(1), delta(1), epsilon(1). F(0) has three main subunits: a(1), b(2) and c(10-14). The alpha and beta chains form an alternating ring which encloses part of the gamma chain. F(1) is attached to F(0) by a central stalk formed by the gamma and epsilon chains, while a peripheral stalk is formed by the delta and b chains.

It localises to the cell inner membrane. Its function is as follows. F(1)F(0) ATP synthase produces ATP from ADP in the presence of a proton or sodium gradient. F-type ATPases consist of two structural domains, F(1) containing the extramembraneous catalytic core and F(0) containing the membrane proton channel, linked together by a central stalk and a peripheral stalk. During catalysis, ATP synthesis in the catalytic domain of F(1) is coupled via a rotary mechanism of the central stalk subunits to proton translocation. In terms of biological role, this protein is part of the stalk that links CF(0) to CF(1). It either transmits conformational changes from CF(0) to CF(1) or is implicated in proton conduction. The sequence is that of ATP synthase subunit delta from Cupriavidus taiwanensis (strain DSM 17343 / BCRC 17206 / CCUG 44338 / CIP 107171 / LMG 19424 / R1) (Ralstonia taiwanensis (strain LMG 19424)).